The sequence spans 342 residues: tRNA N6-adenosine threonylcarbamoyltransferase (342 aa).

Residues His111 and His115 each contribute to the Fe cation site. Substrate is bound by residues 133 to 137 (AVSGG), Asp166, Gly179, Asp183, and Asn272. Position 300 (Asp300) interacts with Fe cation.

This sequence belongs to the KAE1 / TsaD family. The cofactor is Fe(2+).

It is found in the cytoplasm. It carries out the reaction L-threonylcarbamoyladenylate + adenosine(37) in tRNA = N(6)-L-threonylcarbamoyladenosine(37) in tRNA + AMP + H(+). Its function is as follows. Required for the formation of a threonylcarbamoyl group on adenosine at position 37 (t(6)A37) in tRNAs that read codons beginning with adenine. Is involved in the transfer of the threonylcarbamoyl moiety of threonylcarbamoyl-AMP (TC-AMP) to the N6 group of A37, together with TsaE and TsaB. TsaD likely plays a direct catalytic role in this reaction. This Geobacter sp. (strain M21) protein is tRNA N6-adenosine threonylcarbamoyltransferase.